Here is a 227-residue protein sequence, read N- to C-terminus: Phosphoribosylformylglycinamidine synthase subunit PurQ (227 aa).

Residues 2–226 (KFAVIQFPGS…VQAWKEEQVN (225 aa)) form the Glutamine amidotransferase type-1 domain. Catalysis depends on Cys86, which acts as the Nucleophile. Catalysis depends on residues His195 and Glu197.

In terms of assembly, part of the FGAM synthase complex composed of 1 PurL, 1 PurQ and 2 PurS subunits.

It is found in the cytoplasm. It catalyses the reaction N(2)-formyl-N(1)-(5-phospho-beta-D-ribosyl)glycinamide + L-glutamine + ATP + H2O = 2-formamido-N(1)-(5-O-phospho-beta-D-ribosyl)acetamidine + L-glutamate + ADP + phosphate + H(+). The catalysed reaction is L-glutamine + H2O = L-glutamate + NH4(+). The protein operates within purine metabolism; IMP biosynthesis via de novo pathway; 5-amino-1-(5-phospho-D-ribosyl)imidazole from N(2)-formyl-N(1)-(5-phospho-D-ribosyl)glycinamide: step 1/2. Part of the phosphoribosylformylglycinamidine synthase complex involved in the purines biosynthetic pathway. Catalyzes the ATP-dependent conversion of formylglycinamide ribonucleotide (FGAR) and glutamine to yield formylglycinamidine ribonucleotide (FGAM) and glutamate. The FGAM synthase complex is composed of three subunits. PurQ produces an ammonia molecule by converting glutamine to glutamate. PurL transfers the ammonia molecule to FGAR to form FGAM in an ATP-dependent manner. PurS interacts with PurQ and PurL and is thought to assist in the transfer of the ammonia molecule from PurQ to PurL. This chain is Phosphoribosylformylglycinamidine synthase subunit PurQ, found in Listeria welshimeri serovar 6b (strain ATCC 35897 / DSM 20650 / CCUG 15529 / CIP 8149 / NCTC 11857 / SLCC 5334 / V8).